Reading from the N-terminus, the 193-residue chain is Ubiquitin-conjugating enzyme E2 E1 (193 aa).

Residues 1-45 form a disordered region; sequence MSDDDSRASTSSSSSSSSNQQTEKEGSTPKKKESKVSMSKNSKLL. Serine 2 is modified (N-acetylserine). A compositionally biased stretch (low complexity) spans 8-18; the sequence is ASTSSSSSSSS. A compositionally biased stretch (basic and acidic residues) spans 22–35; it reads TEKEGSTPKKKESK. Positions 36–45 are enriched in polar residues; sequence VSMSKNSKLL. The UBC core domain occupies 47–193; that stretch reads TSAKRIQKEL…ARQWTKRYAT (147 aa). The active-site Glycyl thioester intermediate is cysteine 131. Lysine 136 participates in a covalent cross-link: Glycyl lysine isopeptide (Lys-Gly) (interchain with G-Cter in ISG15).

It belongs to the ubiquitin-conjugating enzyme family. As to quaternary structure, interacts with RNF14. In terms of processing, ISGylation suppresses ubiquitin E2 enzyme activity. Post-translationally, autoubiquitinated.

The protein resides in the nucleus. It catalyses the reaction S-ubiquitinyl-[E1 ubiquitin-activating enzyme]-L-cysteine + [E2 ubiquitin-conjugating enzyme]-L-cysteine = [E1 ubiquitin-activating enzyme]-L-cysteine + S-ubiquitinyl-[E2 ubiquitin-conjugating enzyme]-L-cysteine.. The enzyme catalyses S-ubiquitinyl-[E1 ubiquitin-activating enzyme]-L-cysteine + [acceptor protein]-L-lysine = [E1 ubiquitin-activating enzyme]-L-cysteine + N(6)-monoubiquitinyl-[acceptor protein]-L-lysine.. Its pathway is protein modification; protein ubiquitination. Its function is as follows. Accepts ubiquitin from the E1 complex and catalyzes its covalent attachment to other proteins. Catalyzes the covalent attachment of ISG15 to other proteins. Mediates the selective degradation of short-lived and abnormal proteins. In vitro also catalyzes 'Lys-48'-linked polyubiquitination. The chain is Ubiquitin-conjugating enzyme E2 E1 (Ube2e1) from Mus musculus (Mouse).